Here is a 79-residue protein sequence, read N- to C-terminus: Small integral membrane protein 40 (79 aa).

The helical transmembrane segment at 35 to 55 (FFIFLALFLTLLMLEAAYKLL) threads the bilayer.

It localises to the membrane. This chain is Small integral membrane protein 40, found in Homo sapiens (Human).